The primary structure comprises 107 residues: MVKAPRGYRNRTRRLLRKPVREKGSIPRLSTYLREYRVGDKVAIIINPSFPDWGMPHRRFHGLTGTVVGKRGEAYEVEVYLGRKRKTLFVPPVHLKPLSTAAERRGS.

The protein belongs to the eukaryotic ribosomal protein eL21 family.

The protein is Large ribosomal subunit protein eL21 (rpl21e) of Aeropyrum pernix (strain ATCC 700893 / DSM 11879 / JCM 9820 / NBRC 100138 / K1).